The following is a 311-amino-acid chain: Solute carrier family 25 member 48 (311 aa).

3 Solcar repeats span residues 3–86 (SFQL…TQRF), 101–205 (RTLS…LSEW), and 214–301 (PSPC…SLQA). 6 helical membrane passes run 9-29 (FAAGWIGGAASVIVGHPLDTV), 61-81 (GMSFPLASIAVYNSVVFGVFS), 107-127 (LLASMVAGVVSVGLGGPVDLI), 189-209 (VPGYCLYFIPYVFLSEWITPE), 217-237 (CAVWLAGGMAGAISWGTATPM), and 277-295 (ITVNAVRGFPMSAAMFLGY).

Belongs to the mitochondrial carrier (TC 2.A.29) family.

It localises to the mitochondrion inner membrane. The chain is Solute carrier family 25 member 48 (SLC25A48) from Homo sapiens (Human).